A 266-amino-acid chain; its full sequence is MAVGKNKRLTKGGKKGAKKKIVDPFSKKDWYDVKAPAMFNIRNLGKTLVTRTQGTRIASDGLKGRVFEVSLADLQNDEVAFRKFKLITEDVQGKNCLTNFHGMDLTRDKMCSMVKKWQTMIEAHVDVKTTDGYLLRLFCVGFTKKRTNQIRKTSYAQHQQVRQIRKKMMEIMTREVQTNDLKEVVNKLIPDSVGKDIEKACQSIYPLHDVYVRKVKMLKKPKFELGKLMELHGEGGTGTATKATGDDTGAKVERADGYEPPIQETV.

Residues 234–266 form a disordered region; that stretch reads EGGTGTATKATGDDTGAKVERADGYEPPIQETV. Positions 244–257 are enriched in basic and acidic residues; sequence TGDDTGAKVERADG.

The protein belongs to the eukaryotic ribosomal protein eS1 family. In terms of assembly, component of the small ribosomal subunit. Mature ribosomes consist of a small (40S) and a large (60S) subunit. The 40S subunit contains about 33 different proteins and 1 molecule of RNA (18S). The 60S subunit contains about 49 different proteins and 3 molecules of RNA (28S, 5.8S and 5S). Part of the small subunit (SSU) processome, composed of more than 70 proteins and the RNA chaperone small nucleolar RNA (snoRNA) U3.

The protein resides in the cytoplasm. It localises to the nucleus. It is found in the nucleolus. Component of the small ribosomal subunit. The ribosome is a large ribonucleoprotein complex responsible for the synthesis of proteins in the cell. Part of the small subunit (SSU) processome, first precursor of the small eukaryotic ribosomal subunit. During the assembly of the SSU processome in the nucleolus, many ribosome biogenesis factors, an RNA chaperone and ribosomal proteins associate with the nascent pre-rRNA and work in concert to generate RNA folding, modifications, rearrangements and cleavage as well as targeted degradation of pre-ribosomal RNA by the RNA exosome. May play a role during erythropoiesis. This chain is Small ribosomal subunit protein eS1 (rps3a), found in Solea senegalensis (Senegalese sole).